The chain runs to 526 residues: MDVRFYPPPAQPAAAPDAPCLGPSPCLDPYYCNKFDGENMYMSMTEPSQDYVPASQSYPGPSLESEDFNIPPITPPSLPDHSLVHLNEVESGYHSLCHPMNHNGLLPFHPQNMDLPEITVSNMLGQDGTLLSNSISVMPDIRNPEGTQYSSHPQMAAMRPRGQPADIRQQPGMMPHGQLTTINQSQLSAQLGLNMGGSNVPHNSPSPPGSKSATPSPSSSVHEDEGDDTSKINGGEKRPASDMGKKPKTPKKKKKKDPNEPQKPVSAYALFFRDTQAAIKGQNPNATFGEVSKIVASMWDGLGEEQKQVYKKKTEAAKKEYLKQLAAYRASLVSKSYSEPVDVKTSQPPQLINSKPSVFHGPSQAHSALYLSSHYHQQPGMNPHLTAMHPSLPRNIAPKPNNQMPVTVSIANMAVSPPPPLQISPPLHQHLNMQQHQPLTMQQPLGNQLPMQVQSALHSPTMQQGFTLQPDYQTIINPTSTAAQVVTQAMEYVRSGCRNPPPQPVDWNNDYCSSGGMQRDKALYLT.

2 disordered regions span residues 138-178 and 192-264; these read MPDI…PHGQ and GLNM…PQKP. Residues 192 to 203 are compositionally biased toward polar residues; that stretch reads GLNMGGSNVPHN. The segment covering 209 to 220 has biased composition (low complexity); that stretch reads GSKSATPSPSSS. The segment covering 228-245 has biased composition (basic and acidic residues); it reads DTSKINGGEKRPASDMGK. The Nuclear localization signal signature appears at 237-256; it reads KRPASDMGKKPKTPKKKKKK. Residues 246-256 show a composition bias toward basic residues; it reads KPKTPKKKKKK. Positions 261–329 form a DNA-binding region, HMG box; sequence PQKPVSAYAL…EYLKQLAAYR (69 aa).

It belongs to the high motility group (HMG) box superfamily. In terms of assembly, interacts with HBO1 complex composed at least of KAT7/HBO1, ING4, MEAF6, and JADE2; this complex is involved in histone acetylation. Interacts with DNMT1, LEO1, PAF1, SAP130 and SIN3A; these interactors regulate chromatin remodeling. Interacts with an array of proteins involved in RNA processing and translation and DNA replication. As to expression, expressed in NK cells. Highly expressed in tumor-infiltrating CD8-positive T cells (at protein level).

The protein resides in the nucleus. Transcriptional regulator with a major role in neural stem cell commitment and corticogenesis as well as in lymphoid cell development and lymphoid tissue organogenesis. Binds to GC-rich DNA sequences in the proximity of transcription start sites and may alter chromatin structure, modifying access of transcription factors to DNA. During cortical development, controls the neural stem cell pool by inhibiting the switch from proliferative to differentiating progenitors. Beyond progenitor cells, promotes neurite outgrowth in newborn neurons migrating to reach the cortical plate. May activate or repress critical genes for neural stem cell fate such as SOX2, EOMES and ROBO2. Plays an essential role in the development of lymphoid tissue-inducer (LTi) cells, a subset necessary for the formation of secondary lymphoid organs: peripheral lymph nodes and Peyer's patches. Acts as a developmental checkpoint and regulates thymocyte positive selection toward T cell lineage commitment. Required for the development of various T cell subsets, including CD4-positive helper T cells, CD8-positive cytotoxic T cells, regulatory T cells and CD1D-dependent natural killer T (NKT) cells. Required for the differentiation of common lymphoid progenitors (CMP) to innate lymphoid cells (ILC). May regulate the NOTCH-mediated gene program, promoting differentiation of the ILC lineage. Required at the progenitor phase of NK cell development in the bone marrow to specify NK cell lineage commitment. Upon chronic antigen stimulation, diverts T cell development by promoting the generation of exhaustive T cells, while suppressing effector and memory T cell programming. May regulate the expression of genes encoding inhibitory receptors such as PDCD1 and induce the exhaustion program, to prevent the overstimulation of T cells and activation-induced cell death. This Homo sapiens (Human) protein is Thymocyte selection-associated high mobility group box protein TOX.